Reading from the N-terminus, the 389-residue chain is Succinate--CoA ligase [ADP-forming] subunit beta (389 aa).

An ATP-grasp domain is found at 9-244 (KQLLAEYGIP…KTQEDETEVT (236 aa)). Residues lysine 46, 53-55 (GRG), glycine 102, and glutamate 107 each bind ATP. Residues asparagine 199 and aspartate 213 each coordinate Mg(2+). Residues asparagine 264 and 321–323 (GIV) each bind substrate.

This sequence belongs to the succinate/malate CoA ligase beta subunit family. Heterotetramer of two alpha and two beta subunits. Mg(2+) is required as a cofactor.

The enzyme catalyses succinate + ATP + CoA = succinyl-CoA + ADP + phosphate. It catalyses the reaction GTP + succinate + CoA = succinyl-CoA + GDP + phosphate. It functions in the pathway carbohydrate metabolism; tricarboxylic acid cycle; succinate from succinyl-CoA (ligase route): step 1/1. Succinyl-CoA synthetase functions in the citric acid cycle (TCA), coupling the hydrolysis of succinyl-CoA to the synthesis of either ATP or GTP and thus represents the only step of substrate-level phosphorylation in the TCA. The beta subunit provides nucleotide specificity of the enzyme and binds the substrate succinate, while the binding sites for coenzyme A and phosphate are found in the alpha subunit. This Xanthomonas campestris pv. campestris (strain 8004) protein is Succinate--CoA ligase [ADP-forming] subunit beta.